The primary structure comprises 562 residues: ATP-dependent RNA helicase dbp2 (562 aa).

The short motif at 132–160 (ETFDEAGFPRYVMDEVKAQGFPAPTAIQS) is the Q motif element. In terms of domain architecture, Helicase ATP-binding spans 163 to 338 (WPMALSGRDV…ADFLTDFIQV (176 aa)). 176–183 (AETGSGKT) lines the ATP pocket. Residues 286 to 289 (DEAD) carry the DEAD box motif. Positions 370 to 515 (HLEKIMEGRE…QIDPRLAEMA (146 aa)) constitute a Helicase C-terminal domain. The tract at residues 526-548 (GGYRGRGGGGWRGGRGGGGGGGS) is RNA-binding RGG-box. The span at 536 to 550 (WRGGRGGGGGGGSVG) shows a compositional bias: gly residues. The segment at 536–562 (WRGGRGGGGGGGSVGGANALPLNNRRW) is disordered.

Belongs to the DEAD box helicase family. DDX5/DBP2 subfamily. As to quaternary structure, associates with polysomes.

The protein localises to the cytoplasm. The protein resides in the nucleus. It carries out the reaction ATP + H2O = ADP + phosphate + H(+). Its function is as follows. ATP-dependent RNA helicase involved nonsense-mediated mRNA decay and ribosome biogenesis through rRNA processing. In Neurospora crassa (strain ATCC 24698 / 74-OR23-1A / CBS 708.71 / DSM 1257 / FGSC 987), this protein is ATP-dependent RNA helicase dbp2 (drh-1).